The sequence spans 588 residues: Aspartate--tRNA ligase (588 aa).

Glutamate 172 is an L-aspartate binding site. The interval 196–199 (QLFK) is aspartate. An L-aspartate-binding site is contributed by arginine 218. Residues 218-220 (RDE) and glutamine 227 contribute to the ATP site. Histidine 449 contributes to the L-aspartate binding site. Residue glutamate 483 participates in ATP binding. Residue arginine 490 participates in L-aspartate binding. 535-538 (GLDR) is a binding site for ATP.

Belongs to the class-II aminoacyl-tRNA synthetase family. Type 1 subfamily. Homodimer.

The protein localises to the cytoplasm. The catalysed reaction is tRNA(Asp) + L-aspartate + ATP = L-aspartyl-tRNA(Asp) + AMP + diphosphate. Catalyzes the attachment of L-aspartate to tRNA(Asp) in a two-step reaction: L-aspartate is first activated by ATP to form Asp-AMP and then transferred to the acceptor end of tRNA(Asp). This chain is Aspartate--tRNA ligase, found in Histophilus somni (strain 2336) (Haemophilus somnus).